A 433-amino-acid chain; its full sequence is Protein RETICULATA-RELATED 1, chloroplastic (433 aa).

Residues 1 to 63 (MSISLKISHI…LSSRNLRNRC (63 aa)) constitute a chloroplast transit peptide. V64 carries the post-translational modification N-acetylvaline. Positions 93–105 (DLEPELDDGDGGD) are enriched in acidic residues. The tract at residues 93-143 (DLEPELDDGDGGDENGNNDGGGNGGNGDGGGGGGDGEGDDGEDEADKAEEK) is disordered. Gly residues predominate over residues 110-127 (NDGGGNGGNGDGGGGGGD). Positions 128 to 139 (GEGDDGEDEADK) are enriched in acidic residues. The next 2 membrane-spanning stretches (helical) occupy residues 249 to 269 (LYAADLLVGLVVDVALVGLLA) and 323 to 343 (LLYGSVGFGCGLIGQGIANLI).

This sequence belongs to the RETICULATA family. As to expression, expressed in root vasculature, distal region of young leaf primordia, leaf bundle sheath cells, hydathodes and pollen grains.

Its subcellular location is the plastid. It localises to the chloroplast membrane. Its function is as follows. May play a role in leaf development. The protein is Protein RETICULATA-RELATED 1, chloroplastic of Arabidopsis thaliana (Mouse-ear cress).